Here is a 427-residue protein sequence, read N- to C-terminus: Glucose-6-phosphate isomerase (427 aa).

The Proton donor role is filled by E277. Active-site residues include H298 and K414.

Belongs to the GPI family.

Its subcellular location is the cytoplasm. The enzyme catalyses alpha-D-glucose 6-phosphate = beta-D-fructose 6-phosphate. The protein operates within carbohydrate biosynthesis; gluconeogenesis. It functions in the pathway carbohydrate degradation; glycolysis; D-glyceraldehyde 3-phosphate and glycerone phosphate from D-glucose: step 2/4. Its function is as follows. Catalyzes the reversible isomerization of glucose-6-phosphate to fructose-6-phosphate. The protein is Glucose-6-phosphate isomerase of Mycoplasma capricolum subsp. capricolum (strain California kid / ATCC 27343 / NCTC 10154).